A 200-amino-acid polypeptide reads, in one-letter code: Recombination protein RecR (200 aa).

The C4-type zinc finger occupies 57–72 (CSECRTFTEEDTCAIC). The Toprim domain maps to 81–176 (GELCIVESPA…SASRIAHGVP (96 aa)).

It belongs to the RecR family.

Functionally, may play a role in DNA repair. It seems to be involved in an RecBC-independent recombinational process of DNA repair. It may act with RecF and RecO. This Aliivibrio salmonicida (strain LFI1238) (Vibrio salmonicida (strain LFI1238)) protein is Recombination protein RecR.